The chain runs to 92 residues: Small ribosomal subunit protein uS19 (92 aa).

Belongs to the universal ribosomal protein uS19 family.

Functionally, protein S19 forms a complex with S13 that binds strongly to the 16S ribosomal RNA. This chain is Small ribosomal subunit protein uS19, found in Mycoplasmopsis agalactiae (strain NCTC 10123 / CIP 59.7 / PG2) (Mycoplasma agalactiae).